The primary structure comprises 292 residues: 4-hydroxy-tetrahydrodipicolinate synthase (292 aa).

Thr45 serves as a coordination point for pyruvate. The Proton donor/acceptor role is filled by Tyr133. The active-site Schiff-base intermediate with substrate is Lys162. Ile204 provides a ligand contact to pyruvate.

It belongs to the DapA family. Homotetramer; dimer of dimers.

It is found in the cytoplasm. The catalysed reaction is L-aspartate 4-semialdehyde + pyruvate = (2S,4S)-4-hydroxy-2,3,4,5-tetrahydrodipicolinate + H2O + H(+). It functions in the pathway amino-acid biosynthesis; L-lysine biosynthesis via DAP pathway; (S)-tetrahydrodipicolinate from L-aspartate: step 3/4. Its function is as follows. Catalyzes the condensation of (S)-aspartate-beta-semialdehyde [(S)-ASA] and pyruvate to 4-hydroxy-tetrahydrodipicolinate (HTPA). This is 4-hydroxy-tetrahydrodipicolinate synthase from Nitratidesulfovibrio vulgaris (strain DSM 19637 / Miyazaki F) (Desulfovibrio vulgaris).